We begin with the raw amino-acid sequence, 261 residues long: Indole-3-glycerol phosphate synthase (261 aa).

It belongs to the TrpC family.

The catalysed reaction is 1-(2-carboxyphenylamino)-1-deoxy-D-ribulose 5-phosphate + H(+) = (1S,2R)-1-C-(indol-3-yl)glycerol 3-phosphate + CO2 + H2O. Its pathway is amino-acid biosynthesis; L-tryptophan biosynthesis; L-tryptophan from chorismate: step 4/5. The polypeptide is Indole-3-glycerol phosphate synthase (Burkholderia ambifaria (strain ATCC BAA-244 / DSM 16087 / CCUG 44356 / LMG 19182 / AMMD) (Burkholderia cepacia (strain AMMD))).